Reading from the N-terminus, the 580-residue chain is Anaphase-promoting complex subunit 7 (580 aa).

TPR repeat units follow at residues 50-83, 107-140, 141-175, 253-286, 321-354, 356-388, 390-421, 422-456, 458-490, and 491-523; these read IISFSLFGDSLFGKNEFVRSLKYFKQSLDILFKV, YELKYKISLCYIKINRNNLAISYLESIPFSSRGL, DTHLTIARLYKDIGKEKSKECIISYKEVIKLCPLC, VLEKLALSYLYHDEPSIINTFNIFQKIRLLDPYY, AETWTSVALFYFLKENVEKSLENVDRAISIKESH, FAHSLKGEILLSLDEPREALPSLERAFQLSKNI, TARELVRCHLILNQMKEALVVAETINNLSPDY, SKTMALLGMVLANQPEEREEARKILTKALTLSPHC, DTVLTLSKLNVVEGRFQEAIDILNSQLEYQETD, and LMHTEIAGVYLTKDYHEDAMIHYNSALEINPQY. The tract at residues 539–580 is disordered; sequence GIDPDQELDQENDDDDQEEGEGENDQEENDDDDNDDDDEYIS. Positions 542 to 580 are enriched in acidic residues; that stretch reads PDQELDQENDDDDQEEGEGENDQEENDDDDNDDDDEYIS.

Belongs to the APC7 family. The APC/C is composed of at least 13 subunits that stay tightly associated throughout the cell cycle: anapc1, anapc2, anapc3, anapc4, anapc5, anapc6, anapc7, anapc8, anapc10, anapc11, cdc20, cdc26 and cdh1.

Its subcellular location is the nucleus. It functions in the pathway protein modification; protein ubiquitination. In terms of biological role, component of the anaphase promoting complex/cyclosome (APC/C), a cell cycle-regulated E3 ubiquitin-protein ligase complex that controls progression through mitosis and the G1 phase of the cell cycle. In Dictyostelium discoideum (Social amoeba), this protein is Anaphase-promoting complex subunit 7 (anapc7).